We begin with the raw amino-acid sequence, 113 residues long: Hydrogenase maturation factor HypA (113 aa).

H2 lines the Ni(2+) pocket. Zn(2+) contacts are provided by C73, C76, C89, and C92.

This sequence belongs to the HypA/HybF family.

In terms of biological role, involved in the maturation of [NiFe] hydrogenases. Required for nickel insertion into the metal center of the hydrogenase. The protein is Hydrogenase maturation factor HypA of Paracoccus denitrificans (strain Pd 1222).